The primary structure comprises 423 residues: MFLECNPRFVSRLTRDTLALIMAGGRGGRLSNLTDWRTKPAVPFGGKFRLIDFPLSNCINSGIRRIEVLTQYKAHSLIQHIQRGWGFLRGEFGEFVELVPAQQRMDKPLWYAGTADAVYQNIDIIKAHNPSYVLVLAGDHVYKMDYGGMIARHAESGAAMTVGCVEVPRKRASAFGVMSVNEERQVLAFNEKPKDPTPMPGNPDRALVSMGIYVFDRDYLFQLLREDAENFDSSRDFGKDVIPNAIANHKVQAYPFSDPVSGQQAYWRDVGTVDAFFQANMELIGEDPELNLYDEEWPIWTYQAQLPPAKFIQGRDGRHGTAINSMVSGGDIIHGAEVRDSLLFSQVVVQPGATVHEAVILPDVRVGEGCRIRKAVIDEGCRIPAGTVIGEDPAEDRRRFFVTPKDVVLVTAEMLGQEVAHVR.

Alpha-D-glucose 1-phosphate-binding positions include Tyr111, Gly176, 191–192 (EK), and Ser209.

Belongs to the bacterial/plant glucose-1-phosphate adenylyltransferase family. As to quaternary structure, homotetramer.

It catalyses the reaction alpha-D-glucose 1-phosphate + ATP + H(+) = ADP-alpha-D-glucose + diphosphate. It functions in the pathway glycan biosynthesis; glycogen biosynthesis. Its function is as follows. Involved in the biosynthesis of ADP-glucose, a building block required for the elongation reactions to produce glycogen. Catalyzes the reaction between ATP and alpha-D-glucose 1-phosphate (G1P) to produce pyrophosphate and ADP-Glc. The sequence is that of Glucose-1-phosphate adenylyltransferase 1 from Alkalilimnicola ehrlichii (strain ATCC BAA-1101 / DSM 17681 / MLHE-1).